The following is a 335-amino-acid chain: MPATTRLITIYGATGNQGGGVARSLLKNPCFQVRALTRNPNSPASQELAGLGAEIRRADGFDSNSLLAAFEGSWGVFVNINSDDKAFRPAGPTEYDLGMKIVDMAAQAGVQHFVFSSGPSSTELTNGKIRMKAMEMKNKIERYARNNTQFQTVSFICAAWYLENFLVKEIAPLFGGFPFVADAEAFLTFRCPRWGGKEDVPFISISDDYGDIVQGLFLDPHRWNGHVVHGCSDILTFDELVTHFQNVTGQKARFQPLESWETFDTFGVPELEDTKLMFGLTQTTGGLYFGPEPSEKNTAAALKRATAAALGLPRDQQTLITVKGWFQKHFPVTPN.

NADP(+)-binding positions include 12–17 (GATGNQ), 38–42 (RNPNS), 59–60 (DG), 80–82 (INS), Lys137, and 161–164 (YLEN).

It belongs to the NmrA-type oxidoreductase family.

It functions in the pathway secondary metabolite biosynthesis. In terms of biological role, nmrA-like family domain-containing oxidoreductase; part of the gene cluster that mediates the biosynthesis of hancockiamides, an unusual new family of N-cinnamoylated piperazines. The NRPS hkm10 and the NmrA-like reductase hkm9 are proposed to convert two molecules of L-Phe to the intermediary piperazine called xenocockiamide A. Xenocockiamide A is then converted to hancockiamide D via a series of hydroxylations and O-methylations. The tyrosinase hkm6 may catalyze an aromatic hydroxylation, then the 2-oxoglutarate-dependent Fe(II) dioxygenase hkm4 and the FAD-dependent phenol hydroxylase hkm7 may catalyze consecutive hydroxylations to install 2 more hydroxy groups, and the methyltransferase hkm8 probably catalyzes two methylations using 2 molecules of S-adenosyl-L-methionine (SAM). The NRPS hkm11 activates and transfers trans-cinnamate supplied by the PAL hkm12 to hancockiamide D and produces hancockiamide A. NRPS Hkm11 has the flexibility to tolerate the bulky hancockiamide G as a substrate and the absence of the acetyl-transferase hkm3 opens up the opportunity for hkm11 to introduce a second N-cinnamoyl moiety. The cytochrome P450 monooxygenase hkm5 catalyzes the methylenedioxy bridge formation, converting hancockiamide A into hancockiamide G. Hkm5 can also convert hancockiamide B into hancockiamide C, and hancockiamide D into hancockiamide H. The N-acetyltransferase hkm3 finally transfers an acetyl group to 1-N of piperazine, converting hancockiamide A into hancockiamide B and hancockiamide G into hancockiamide C. This Aspergillus hancockii protein is NmrA-like family domain-containing oxidoreductase hkm9.